Here is a 1863-residue protein sequence, read N- to C-terminus: Transient receptor potential cation channel subfamily M member 7 (1863 aa).

Methionine 1 carries the N-acetylmethionine modification. The Cytoplasmic portion of the chain corresponds to 1 to 850; that stretch reads MSQKSWIEST…ITRKFYAFYH (850 aa). Serine 101 bears the Phosphoserine mark. Residues 544–555 show a composition bias toward low complexity; the sequence is NRRSGRNTSSST. A disordered region spans residues 544–574; sequence NRRSGRNTSSSTPQLRKSHETFGNRADKKEK. The span at 560 to 573 shows a compositional bias: basic and acidic residues; that stretch reads KSHETFGNRADKKE. A helical membrane pass occupies residues 851–876; the sequence is APIVKFWFNTLAYLGFLMLYTFVVLV. At 877–882 the chain is on the extracellular side; it reads KMEQLP. A helical membrane pass occupies residues 883–904; the sequence is SVQEWIVIAYIFTYAIEKVREV. Residues 905–923 lie on the Cytoplasmic side of the membrane; the sequence is FMSEAGKISQKIKVWFSDY. Residues 924-943 traverse the membrane as a helical segment; that stretch reads FNVSDTIAIISFFVGFGLRF. Residues 944 to 956 lie on the Extracellular side of the membrane; that stretch reads GAKWNYINAYDNH. The chain crosses the membrane as a helical span at residues 957–980; that stretch reads VFVAGRLIYCLNIIFWYVRLLDFL. Residues 981-999 are Cytoplasmic-facing; sequence AVNQQAGPYVMMIGKMVAN. A helical transmembrane segment spans residues 1000–1023; the sequence is MFYIVVIMALVLLSFGVPRKAILY. Topologically, residues 1024–1025 are extracellular; that stretch reads PH. The segment at residues 1026-1066 is an intramembrane region (pore-forming); that stretch reads EEPSWSLAKDIVFHPYWMIFGEVYAYEIDVCANDSTLPTIC. Residues 1067–1069 are Extracellular-facing; that stretch reads GPG. A helical membrane pass occupies residues 1070–1098; the sequence is TWLTPFLQAVYLFVQYIIMVNLLIAFFNN. The Cytoplasmic portion of the chain corresponds to 1099 to 1863; sequence VYLQVKAISN…EATNSVRLML (765 aa). Residues cysteine 1143, cysteine 1144, and cysteine 1146 are each lipidated (S-palmitoyl cysteine). Residue threonine 1163 is modified to Phosphothreonine. Phosphoserine occurs at positions 1191, 1193, 1224, 1255, and 1258. Residues 1198-1250 adopt a coiled-coil conformation; the sequence is RVTFERVEQMSIQIKEVGDRVNYIKRSLQSLDSQIGHLQDLSALTVDTLKTLT. Residue threonine 1265 is modified to Phosphothreonine. A phosphoserine mark is found at serine 1300, serine 1357, serine 1360, serine 1385, serine 1386, serine 1389, serine 1394, serine 1395, and serine 1403. A disordered region spans residues 1380–1418; it reads NQKLGSSPNSSPHMSSPPTKFSVSTPSQPSCKSHLESTT. Positions 1385-1397 are enriched in low complexity; the sequence is SSPNSSPHMSSPP. The segment covering 1398-1410 has biased composition (polar residues); that stretch reads TKFSVSTPSQPSC. Phosphothreonine is present on threonine 1404. 2 positions are modified to phosphoserine: serine 1406 and serine 1445. Residue threonine 1454 is modified to Phosphothreonine. The residue at position 1455 (serine 1455) is a Phosphoserine. A phosphothreonine mark is found at threonine 1466 and threonine 1470. Phosphoserine occurs at positions 1491, 1498, 1502, 1511, 1525, and 1531. The disordered stretch occupies residues 1498–1539; the sequence is SRRASTEDSPEVDSKAALLPDWLRDRPSNREMPSEGGTLNGL. Over residues 1519-1530 the composition is skewed to basic and acidic residues; that stretch reads WLRDRPSNREMP. At threonine 1535 the chain carries Phosphothreonine. At serine 1541 the chain carries Phosphoserine. Threonine 1549 is subject to Phosphothreonine. Residues serine 1565 and serine 1567 each carry the phosphoserine modification. Threonine 1581 is modified (phosphothreonine). An Alpha-type protein kinase domain is found at 1592–1822; it reads ILNNSMSSWS…CCRKLKLPDL (231 aa). Phosphoserine is present on residues serine 1596 and serine 1613. Positions 1619, 1620, 1621, 1622, and 1646 each coordinate ADP. Serine 1658 carries the post-translational modification Phosphoserine. At threonine 1683 the chain carries Phosphothreonine. Residues glutamate 1718, glutamate 1719, and methionine 1721 each coordinate ADP. Residue histidine 1751 coordinates Zn(2+). Aspartate 1765 functions as the Proton acceptor in the catalytic mechanism. Aspartate 1775 serves as a coordination point for ADP. Serine 1777 carries the post-translational modification Phosphoserine. Zn(2+)-binding residues include histidine 1808, cysteine 1810, and cysteine 1814. A Phosphothreonine modification is found at threonine 1828. The interval 1838-1863 is disordered; that stretch reads ESSDLNLQSGNSTKESEATNSVRLML. The segment covering 1841 to 1863 has biased composition (polar residues); the sequence is DLNLQSGNSTKESEATNSVRLML. Phosphoserine occurs at positions 1846, 1849, and 1858.

This sequence in the C-terminal section; belongs to the protein kinase superfamily. Alpha-type protein kinase family. ALPK subfamily. In the N-terminal section; belongs to the transient receptor (TC 1.A.4) family. LTrpC subfamily. TRPM7 sub-subfamily. In terms of assembly, homodimer. Homotetramer. Forms heteromers with TRPM6; heteromeric channels are functionally different from the homomeric channels. Interacts with PLCB1. Zn(2+) serves as cofactor. Post-translationally, palmitoylated; palmitoylation at Cys-1143, Cys-1144 and Cys-1146 promotes TRPM7 trafficking from the Golgi to the surface membrane. In terms of processing, autophosphorylated; autophosphorylation regulates TRPM7 kinase activity towards its substrates. The C-terminal kinase domain can be cleaved from the channel segment in a cell-type-specific fashion. TRPM7 is cleaved by caspase-8, dissociating the kinase from the ion-conducting pore. The cleaved kinase fragments (M7CKs) can translocate to the cell nucleus and binds chromatin-remodeling complex proteins in a Zn(2+)-dependent manner to ultimately phosphorylate specific Ser/Thr residues of histones. As to expression, found to be expressed in brain and skeletal muscle, with stronger signals in kidney, heart, liver and spleen.

It localises to the cell membrane. The protein resides in the cytoplasmic vesicle membrane. Its subcellular location is the nucleus. It catalyses the reaction L-seryl-[protein] + ATP = O-phospho-L-seryl-[protein] + ADP + H(+). The catalysed reaction is L-threonyl-[protein] + ATP = O-phospho-L-threonyl-[protein] + ADP + H(+). The enzyme catalyses Mg(2+)(in) = Mg(2+)(out). It carries out the reaction Ca(2+)(in) = Ca(2+)(out). It catalyses the reaction Zn(2+)(in) = Zn(2+)(out). With respect to regulation, channel displays constitutive activity. Channel activity is negatively regulated by cytosolic Mg(2+), Mg-ATP and low intracellular pH. Resting free cytosolic Mg(2+) and Mg-ATP concentrations seem to be sufficient to block native TRPM7 channel activity. TRPM7 channel activity is highly dependent on membrane levels of phosphatidylinositol 4,5 bisphosphate (PIP2). PIP2 hydrolysis negatively regulates TRPM7 channel activity. TRPM7 kinase activity does not affect channel activity. The kinase activity is controlled through the autophosphorylation of a serine/threonine-rich region located N-terminal to the catalytic domain. Its function is as follows. Bifunctional protein that combines an ion channel with an intrinsic kinase domain, enabling it to modulate cellular functions either by conducting ions through the pore or by phosphorylating downstream proteins via its kinase domain. The channel is highly permeable to divalent cations, specifically calcium (Ca2+), magnesium (Mg2+) and zinc (Zn2+) and mediates their influx. Controls a wide range of biological processes such as Ca2(+), Mg(2+) and Zn(2+) homeostasis, vesicular Zn(2+) release channel and intracellular Ca(2+) signaling, embryonic development, immune responses, cell motility, proliferation and differentiation. The C-terminal alpha-kinase domain autophosphorylates cytoplasmic residues of TRPM7. TRPM7 phosphorylates SMAD2, suggesting that TRPM7 kinase may play a role in activating SMAD signaling pathways. In vitro, TRPM7 kinase phosphorylates ANXA1 (annexin A1), myosin II isoforms and a variety of proteins with diverse cellular functions. Functionally, the cleaved channel exhibits substantially higher current and potentiates Fas receptor signaling. In terms of biological role, the C-terminal kinase domain can be cleaved from the channel segment in a cell-type-specific fashion. In immune cells, the TRPM7 kinase domain is clipped from the channel domain by caspases in response to Fas-receptor stimulation. The cleaved kinase fragments can translocate to the nucleus, and bind chromatin-remodeling complex proteins in a Zn(2+)-dependent manner to ultimately phosphorylate specific Ser/Thr residues of histones known to be functionally important for cell differentiation and embryonic development. In Mus musculus (Mouse), this protein is Transient receptor potential cation channel subfamily M member 7 (Trpm7).